The sequence spans 84 residues: Cell division topological specificity factor (84 aa).

It belongs to the MinE family.

Its function is as follows. Prevents the cell division inhibition by proteins MinC and MinD at internal division sites while permitting inhibition at polar sites. This ensures cell division at the proper site by restricting the formation of a division septum at the midpoint of the long axis of the cell. The sequence is that of Cell division topological specificity factor from Ralstonia pickettii (strain 12J).